A 483-amino-acid polypeptide reads, in one-letter code: Glutamyl-tRNA(Gln) amidotransferase subunit A (483 aa).

Active-site charge relay system residues include lysine 76 and serine 151. Serine 175 acts as the Acyl-ester intermediate in catalysis.

This sequence belongs to the amidase family. GatA subfamily. In terms of assembly, heterotrimer of A, B and C subunits.

It catalyses the reaction L-glutamyl-tRNA(Gln) + L-glutamine + ATP + H2O = L-glutaminyl-tRNA(Gln) + L-glutamate + ADP + phosphate + H(+). Functionally, allows the formation of correctly charged Gln-tRNA(Gln) through the transamidation of misacylated Glu-tRNA(Gln) in organisms which lack glutaminyl-tRNA synthetase. The reaction takes place in the presence of glutamine and ATP through an activated gamma-phospho-Glu-tRNA(Gln). The sequence is that of Glutamyl-tRNA(Gln) amidotransferase subunit A from Nitrosospira multiformis (strain ATCC 25196 / NCIMB 11849 / C 71).